The primary structure comprises 540 residues: Cystathionine gamma-synthase 1, chloroplastic (540 aa).

Residues 1-78 constitute a chloroplast transit peptide; sequence MAVSSCARAF…RNCSNIGVAQ (78 aa). Positions 203, 205, 233, 234, 258, 353, and 355 each coordinate pyridoxal 5'-phosphate. An N6-(pyridoxal phosphate)lysine modification is found at lysine 356.

This sequence belongs to the trans-sulfuration enzymes family. In terms of assembly, forms homotetramers composed of 2 homodimers. Pyridoxal 5'-phosphate is required as a cofactor.

Its subcellular location is the plastid. The protein resides in the chloroplast. The enzyme catalyses O-phospho-L-homoserine + L-cysteine = L,L-cystathionine + phosphate. The catalysed reaction is O-succinyl-L-homoserine + L-cysteine = L,L-cystathionine + succinate + H(+). It participates in amino-acid biosynthesis; L-methionine biosynthesis via de novo pathway; L-cystathionine from O-succinyl-L-homoserine: step 1/1. Its activity is regulated as follows. Irreversibly inactivated by DL-propargylglycine. Catalyzes the first committed step of methionine (Met) biosynthesis. Catalyzes the formation of L-cystathionine from homoserine esters and L-cysteine, via a gamma-replacement reaction. The polypeptide is Cystathionine gamma-synthase 1, chloroplastic (Nicotiana tabacum (Common tobacco)).